A 1770-amino-acid chain; its full sequence is Transposon Ty2-LR1 Gag-Pol polyprotein (1770 aa).

3 stretches are compositionally biased toward polar residues: residues 1 to 11, 19 to 39, and 49 to 60; these read MESQQLHQNPH, ASVT…SASN, and KVNSQQETTPGT. Disordered regions lie at residues 1–86 and 359–453; these read MESQ…GQYQ and QHSE…LPDH. Positions 295–397 are RNA-binding; that stretch reads ENNINVSDRL…SSKPRAAKAH (103 aa). Residues 369–381 show a composition bias toward low complexity; that stretch reads TSPNTTNTKVTTR. Polar residues-rich tracts occupy residues 399–408 and 415–435; these read IATSSKFSRV and ESTV…GQQQ. Asp457 acts as the For protease activity; shared with dimeric partner in catalysis. An integrase-type zinc finger-like region spans residues 579-636; that stretch reads NVNKSKSVNKYPYPLIHRMLGHANFRSIQKSLKKNAVTYLKESDIEWSNASTYQCPDC. The Integrase catalytic domain occupies 656 to 831; it reads ESYEPFQYLH…AGLDITTILP (176 aa). Mg(2+) is bound by residues Asp667 and Asp732. 4 disordered regions span residues 1005–1038, 1058–1135, 1146–1165, and 1170–1205; these read GGTI…MIDL, GTEE…KSSK, LPLP…VSKD, and HSRQ…TEIE. Polar residues-rich tracts occupy residues 1009-1024 and 1065-1082; these read ESDT…FTAR and QRNS…STPS. Basic and acidic residues predominate over residues 1151-1165; that stretch reads LTHKSPTDTSDVSKD. The Bipartite nuclear localization signal signature appears at 1193-1227; it reads KKRSLEDNETEIEVSRDTWNNKNMRSLEPPRSKKR. The region spanning 1353 to 1491 is the Reverse transcriptase Ty1/copia-type domain; that stretch reads NDYYITQLDI…DILGLEIKYQ (139 aa). The Mg(2+) site is built by Asp1361, Asp1442, Asp1443, Asp1625, Glu1667, and Asp1700. The region spanning 1625–1767 is the RNase H Ty1/copia-type domain; that stretch reads DASYGNQPYY…IKTFKLLTNK (143 aa).

As to quaternary structure, the capsid protein forms a homotrimer, from which the VLPs are assembled. The protease is a homodimer, whose active site consists of two apposed aspartic acid residues. In terms of processing, initially, virus-like particles (VLPs) are composed of the structural unprocessed proteins Gag and Gag-Pol, and also contain the host initiator methionine tRNA (tRNA(i)-Met) which serves as a primer for minus-strand DNA synthesis, and a dimer of genomic Ty RNA. Processing of the polyproteins occurs within the particle and proceeds by an ordered pathway, called maturation. First, the protease (PR) is released by autocatalytic cleavage of the Gag-Pol polyprotein, and this cleavage is a prerequisite for subsequent processing at the remaining sites to release the mature structural and catalytic proteins. Maturation takes place prior to the RT reaction and is required to produce transposition-competent VLPs.

It is found in the cytoplasm. Its subcellular location is the nucleus. The catalysed reaction is DNA(n) + a 2'-deoxyribonucleoside 5'-triphosphate = DNA(n+1) + diphosphate. The enzyme catalyses Endonucleolytic cleavage to 5'-phosphomonoester.. In terms of biological role, capsid protein (CA) is the structural component of the virus-like particle (VLP), forming the shell that encapsulates the retrotransposons dimeric RNA genome. The particles are assembled from trimer-clustered units and there are holes in the capsid shells that allow for the diffusion of macromolecules. CA also has nucleocapsid-like chaperone activity, promoting primer tRNA(i)-Met annealing to the multipartite primer-binding site (PBS), dimerization of Ty2 RNA and initiation of reverse transcription. Its function is as follows. The aspartyl protease (PR) mediates the proteolytic cleavages of the Gag and Gag-Pol polyproteins after assembly of the VLP. Functionally, reverse transcriptase/ribonuclease H (RT) is a multifunctional enzyme that catalyzes the conversion of the retro-elements RNA genome into dsDNA within the VLP. The enzyme displays a DNA polymerase activity that can copy either DNA or RNA templates, and a ribonuclease H (RNase H) activity that cleaves the RNA strand of RNA-DNA heteroduplexes during plus-strand synthesis and hydrolyzes RNA primers. The conversion leads to a linear dsDNA copy of the retrotransposon that includes long terminal repeats (LTRs) at both ends. Integrase (IN) targets the VLP to the nucleus, where a subparticle preintegration complex (PIC) containing at least integrase and the newly synthesized dsDNA copy of the retrotransposon must transit the nuclear membrane. Once in the nucleus, integrase performs the integration of the dsDNA into the host genome. This Saccharomyces cerevisiae (strain ATCC 204508 / S288c) (Baker's yeast) protein is Transposon Ty2-LR1 Gag-Pol polyprotein (TY2B-LR1).